The following is a 376-amino-acid chain: UDP-4-amino-4,6-dideoxy-N-acetyl-beta-L-altrosamine transaminase (376 aa).

Substrate is bound by residues Tyr4, 24–27 (EILT), Ala54, and Ser176. Lys181 carries the N6-(pyridoxal phosphate)lysine modification. Residues Asn226 and 311-314 (QVHY) each bind substrate.

The protein belongs to the DegT/DnrJ/EryC1 family.

The catalysed reaction is UDP-4-amino-4,6-dideoxy-N-acetyl-beta-L-altrosamine + 2-oxoglutarate = UDP-2-acetamido-2,6-dideoxy-beta-L-arabino-hex-4-ulose + L-glutamate. Its function is as follows. Catalyzes the second step in the biosynthesis of pseudaminic acid, a sialic-acid-like sugar that is used to modify flagellin. Uses UDP-2-acetamido-2,6-dideoxy-beta-L-arabino-4-hexulose as substrate producing UDP-4-amino-4,6-dideoxy-beta-L-AltNAc. The sequence is that of UDP-4-amino-4,6-dideoxy-N-acetyl-beta-L-altrosamine transaminase (pseC) from Campylobacter jejuni subsp. jejuni serotype O:2 (strain ATCC 700819 / NCTC 11168).